The sequence spans 196 residues: Pyridoxal 5'-phosphate synthase subunit PdxT (196 aa).

L-glutamine is bound at residue 47-49 (GES). The active-site Nucleophile is the Cys79. L-glutamine is bound by residues Arg106 and 134–135 (IR). Active-site charge relay system residues include His170 and Glu172.

This sequence belongs to the glutaminase PdxT/SNO family. As to quaternary structure, in the presence of PdxS, forms a dodecamer of heterodimers. Only shows activity in the heterodimer.

It catalyses the reaction aldehydo-D-ribose 5-phosphate + D-glyceraldehyde 3-phosphate + L-glutamine = pyridoxal 5'-phosphate + L-glutamate + phosphate + 3 H2O + H(+). The enzyme catalyses L-glutamine + H2O = L-glutamate + NH4(+). It participates in cofactor biosynthesis; pyridoxal 5'-phosphate biosynthesis. Its function is as follows. Catalyzes the hydrolysis of glutamine to glutamate and ammonia as part of the biosynthesis of pyridoxal 5'-phosphate. The resulting ammonia molecule is channeled to the active site of PdxS. In Bacillus cereus (strain B4264), this protein is Pyridoxal 5'-phosphate synthase subunit PdxT.